The primary structure comprises 395 residues: Carbohydrate sulfotransferase 6 (395 aa).

Residues 1 to 5 (MWLPR) lie on the Cytoplasmic side of the membrane. Residues 6–26 (VSSTAVTALLLAQTFLLLFLV) form a helical; Signal-anchor for type II membrane protein membrane-spanning segment. Topologically, residues 27-395 (SRPGPSSPAG…ASSTASHPRN (369 aa)) are lumenal. 49-55 (WRSGSSF) is a binding site for 3'-phosphoadenylyl sulfate. Asn116 carries N-linked (GlcNAc...) asparagine glycosylation. 202 to 210 (RDPRAVLRS) contributes to the 3'-phosphoadenylyl sulfate binding site. Residues Asn229, Asn305, and Asn328 are each glycosylated (N-linked (GlcNAc...) asparagine).

The protein belongs to the sulfotransferase 1 family. Gal/GlcNAc/GalNAc subfamily. As to expression, expressed in cornea. Mainly expressed in brain. Also expressed in spinal cord and trachea.

The protein localises to the golgi apparatus membrane. The enzyme catalyses 3'-phosphoadenylyl sulfate + keratan = adenosine 3',5'-bisphosphate + keratan 6'-sulfate.. Sulfotransferase that utilizes 3'-phospho-5'-adenylyl sulfate (PAPS) as sulfonate donor to catalyze the transfer of sulfate to position 6 of non-reducing N-acetylglucosamine (GlcNAc) residues of keratan. Cooperates with B4GALT4 galactosyltransferase and B3GNT7 N-acetylglucosaminyltransferase to construct and elongate the sulfated disaccharide unit [-&gt;3Galbeta1-&gt;4(6-sulfoGlcNAcbeta)1-&gt;] within keratan sulfate polymer. Involved in biosynthesis of keratan sulfate in cornea, with an impact on proteoglycan fibril organization and corneal transparency. Involved in sulfation of endothelial mucins such as GLYCAM1. This Homo sapiens (Human) protein is Carbohydrate sulfotransferase 6.